The chain runs to 54 residues: Ribulose bisphosphate carboxylase large chain (54 aa).

The propeptide occupies 1-2; sequence MS. Pro-3 carries the N-acetylproline modification. Lys-14 bears the N6,N6,N6-trimethyllysine mark.

Belongs to the RuBisCO large chain family. Type I subfamily. As to quaternary structure, heterohexadecamer of 8 large chains and 8 small chains.

Its subcellular location is the plastid. The protein resides in the chloroplast. It carries out the reaction 2 (2R)-3-phosphoglycerate + 2 H(+) = D-ribulose 1,5-bisphosphate + CO2 + H2O. The enzyme catalyses D-ribulose 1,5-bisphosphate + O2 = 2-phosphoglycolate + (2R)-3-phosphoglycerate + 2 H(+). In terms of biological role, ruBisCO catalyzes two reactions: the carboxylation of D-ribulose 1,5-bisphosphate, the primary event in carbon dioxide fixation, as well as the oxidative fragmentation of the pentose substrate in the photorespiration process. Both reactions occur simultaneously and in competition at the same active site. In Colletia hystrix (Crucifixion thorn), this protein is Ribulose bisphosphate carboxylase large chain (rbcL).